Consider the following 330-residue polypeptide: Serpentine receptor class J-38 (330 aa).

7 helical membrane passes run 6-26 (IYIF…PIFV), 43-63 (LLLF…VVPI), 98-118 (LVAS…LVIY), 135-155 (LLLS…LGYA), 200-220 (TIIW…LALL), 253-273 (IPIV…IFGI), and 285-305 (GALG…LPIF).

The protein belongs to the nematode receptor-like protein srj family.

The protein resides in the membrane. In Caenorhabditis elegans, this protein is Serpentine receptor class J-38 (srj-38).